Here is a 221-residue protein sequence, read N- to C-terminus: Triosephosphate isomerase (221 aa).

8–10 provides a ligand contact to substrate; it reads NLK. H92 (electrophile) is an active-site residue. Catalysis depends on E140, which acts as the Proton acceptor. Substrate contacts are provided by residues I145, G180, and 201–202; that span reads AS.

The protein belongs to the triosephosphate isomerase family. As to quaternary structure, homotetramer; dimer of dimers.

It is found in the cytoplasm. It carries out the reaction D-glyceraldehyde 3-phosphate = dihydroxyacetone phosphate. It functions in the pathway carbohydrate biosynthesis; gluconeogenesis. It participates in carbohydrate degradation; glycolysis; D-glyceraldehyde 3-phosphate from glycerone phosphate: step 1/1. Its function is as follows. Involved in the gluconeogenesis. Catalyzes stereospecifically the conversion of dihydroxyacetone phosphate (DHAP) to D-glyceraldehyde-3-phosphate (G3P). The protein is Triosephosphate isomerase of Methanococcoides burtonii (strain DSM 6242 / NBRC 107633 / OCM 468 / ACE-M).